The primary structure comprises 275 residues: Nitrogenase iron protein 1 (275 aa).

9–16 (GKGGIGKS) lines the ATP pocket. Cys-97 lines the [4Fe-4S] cluster pocket. The residue at position 100 (Arg-100) is an ADP-ribosylarginine; by dinitrogenase reductase ADP-ribosyltransferase. Position 132 (Cys-132) interacts with [4Fe-4S] cluster.

This sequence belongs to the NifH/BchL/ChlL family. Homodimer. [4Fe-4S] cluster serves as cofactor. Post-translationally, the reversible ADP-ribosylation of Arg-100 inactivates the nitrogenase reductase and regulates nitrogenase activity.

It catalyses the reaction N2 + 8 reduced [2Fe-2S]-[ferredoxin] + 16 ATP + 16 H2O = H2 + 8 oxidized [2Fe-2S]-[ferredoxin] + 2 NH4(+) + 16 ADP + 16 phosphate + 6 H(+). In terms of biological role, the key enzymatic reactions in nitrogen fixation are catalyzed by the nitrogenase complex, which has 2 components: the iron protein and the molybdenum-iron protein. This is Nitrogenase iron protein 1 (nifH1) from Methanothermobacter thermautotrophicus (strain ATCC 29096 / DSM 1053 / JCM 10044 / NBRC 100330 / Delta H) (Methanobacterium thermoautotrophicum).